Reading from the N-terminus, the 186-residue chain is Bis(5'-nucleosyl)-tetraphosphatase, symmetrical (186 aa).

Residues 18-132 (RYIHTVGVMN…IYVADYIEPN (115 aa)) enclose the HD domain. Histidine 21 serves as a coordination point for ADP. Residues histidine 21, histidine 50, and aspartate 51 each coordinate Fe cation. Residues 51–54 (DYAK), histidine 83, 109–110 (HT), aspartate 127, arginine 133, and 170–175 (PVFPDT) each bind ADP. Aspartate 127 is a Fe cation binding site.

Belongs to the Ap4A hydrolase YqeK family. In terms of assembly, homodimer.

The enzyme catalyses P(1),P(4)-bis(5'-adenosyl) tetraphosphate + H2O = 2 ADP + 2 H(+). Its function is as follows. Hydrolyzes diadenosine 5',5'''-P1,P4-tetraphosphate (Ap4A) to yield ADP. This Bacillus subtilis (strain 168) protein is Bis(5'-nucleosyl)-tetraphosphatase, symmetrical (yqeK).